A 535-amino-acid chain; its full sequence is EH domain-containing protein 3 (535 aa).

Met-1 is subject to N-acetylmethionine. The 232-residue stretch at 55–286 (FDNKPMVLLV…DLFKDIQSLP (232 aa)) folds into the Dynamin-type G domain. The G1 motif stretch occupies residues 65 to 72 (GQYSTGKT). An ATP-binding site is contributed by 65–72 (GQYSTGKT). The interval 91-92 (EP) is G2 motif. Residues 153-156 (DTPG) are G3 motif. Positions 198–227 (DEFSEVIKALKNHEDKMRVVLNKADQIETQ) form a coiled coil. The G4 motif stretch occupies residues 219–222 (NKAD). Position 220 (Lys-220) interacts with ATP. Residue Ile-243 is a region of interest, G5 motif. Trp-258 lines the ATP pocket. Lys-315 participates in a covalent cross-link: Glycyl lysine isopeptide (Lys-Gly) (interchain with G-Cter in SUMO). A phosphoserine mark is found at Ser-349 and Ser-456. Residues 444-532 (DKPMYDEIFY…AHLLPPSKRK (89 aa)) enclose the EH domain. Residues 476-511 (LPNSVLGKIWKLADIDKDGMLDDEEFALANHLIKVK) form the EF-hand domain. Residues Asp-489, Asp-491, Asp-493, Met-495, and Glu-500 each coordinate Ca(2+). Lys-511 is covalently cross-linked (Glycyl lysine isopeptide (Lys-Gly) (interchain with G-Cter in SUMO)).

It belongs to the TRAFAC class dynamin-like GTPase superfamily. Dynamin/Fzo/YdjA family. EHD subfamily. In terms of assembly, homooligomer, and heterooligomer with EHD1, EHD2 and EHD4, ATP-binding is required for heterooligomerization. Interacts with PACSIN1. Interacts with PACSIN2. Interacts (via EH domain) with MICALL1. Interacts (via EH domain) with RAB11FIP2. Interacts with ANK2. Interacts with CACNA1GG and CACNA1H.

The protein resides in the recycling endosome membrane. Its subcellular location is the cell membrane. It localises to the cell projection. It is found in the cilium membrane. ATP- and membrane-binding protein that controls membrane reorganization/tubulation upon ATP hydrolysis. In vitro causes tubulation of endocytic membranes. Binding to phosphatidic acid induces its membrane tubulation activity. Plays a role in endocytic transport. Involved in early endosome to recycling endosome compartment (ERC), retrograde early endosome to Golgi, and endosome to plasma membrane (rapid recycling) protein transport. Involved in the regulation of Golgi maintenance and morphology. Involved in the recycling of internalized D1 dopamine receptor. Plays a role in cardiac protein trafficking probably implicating ANK2. Involved in the ventricular membrane targeting of SLC8A1 and CACNA1C and probably the atrial membrane localization of CACNA1GG and CACNA1H implicated in the regulation of atrial myocyte excitability and cardiac conduction. In conjunction with EHD4 may be involved in endocytic trafficking of KDR/VEGFR2 implicated in control of glomerular function. Involved in the rapid recycling of integrin beta-3 implicated in cell adhesion maintenance. Involved in the unidirectional retrograde dendritic transport of endocytosed BACE1 and in efficient sorting of BACE1 to axons implicating a function in neuronal APP processing. Plays a role in the formation of the ciliary vesicle, an early step in cilium biogenesis; possibly sharing redundant functions with Ehd1. In Rattus norvegicus (Rat), this protein is EH domain-containing protein 3.